A 109-amino-acid polypeptide reads, in one-letter code: Phycoerythrin alpha-2 subunit (109 aa).

Residues Asp-52, Ser-53, Glu-63, Arg-64, Cys-67, Thr-72, Lys-74, Ala-75, and Lys-84 each contribute to the (2R,3E)-phycoerythrobilin site.

The protein belongs to the phycoerythrin family. In terms of assembly, heterotetramer of 2 different alpha chains and 2 identical beta chains which form 2 alpha-beta heterodimers within the heterotetramer. The two alpha-beta heterodimers are rotated to an open configuration in contrast to the closed configuration found in other cryptophyte species due to the insertion of a single amino acid, Asp-65, in a conserved region of the alpha chain. In the open form, the central chromophores are not in physical contact but are separated by a water-filled channel. Post-translationally, contains three phycoerythrobilin chromophores with binding mediated by both the alpha and beta subunits.

The protein resides in the plastid. It is found in the chloroplast thylakoid membrane. Functionally, light-harvesting photosynthetic tetrapyrrole chromophore-protein from the phycobiliprotein complex. This Hemiselmis andersenii (Cryptophyte alga) protein is Phycoerythrin alpha-2 subunit.